Reading from the N-terminus, the 334-residue chain is Terpene synthase 1 (334 aa).

Residues Asp-82 and Asp-86 each contribute to the Mg(2+) site. Residues 82–86 (DDIFD) carry the D(D/E)XX(D/E) motif motif. Residue Arg-184 coordinates substrate. 3 residues coordinate Mg(2+): Asn-230, Ser-234, and Glu-238. An NSE motif motif is present at residues 230–238 (NDIYSYHRE). Residues 309–316 (WSESCTRY) carry the WxxxxxRY motif motif.

It belongs to the terpene synthase family. Mg(2+) is required as a cofactor.

It catalyses the reaction (2E,6E)-farnesyl diphosphate = gamma-muurolene + diphosphate. The catalysed reaction is (2E,6E)-farnesyl diphosphate = alpha-muurolene + diphosphate. The enzyme catalyses (2E,6E)-farnesyl diphosphate = (-)-(E)-beta-caryophyllene + diphosphate. It carries out the reaction (2E)-geranyl diphosphate = beta-myrcene + diphosphate. In terms of biological role, terpene synthase that catalyzes the cyclization of farnesyl diphosphate (FPP) into a mixture of sesquiterpenes with gamma-muurolene as the most abundant compound and (-)-beta-caryophyllene, alpha-muurolene, and 4 unidentified sesquiterpenes as minor compoundss. TPS1 also shows monoterpene synthase activity and can also use geranyl diphosphate (GPP) as a substrate to convert it into a mixture of cyclic and acyclic monoterpenes, including myrcene and linalool. P.polycephalum has a unique biology and these volatile terpenoids could function in internal communication of P.polycephalum, to mark the territory that have been explored, or they may be involved in chemotaxis. This Physarum polycephalum (Slime mold) protein is Terpene synthase 1.